The following is a 191-amino-acid chain: Prostaglandin-H2 D-isomerase (191 aa).

The signal sequence occupies residues 1 to 24; that stretch reads MATPNRPWMGLLLLGVLGVLQTPA. N51 is a glycosylation site (N-linked (GlcNAc...) asparagine). C65 (nucleophile) is an active-site residue. N78 carries an N-linked (GlcNAc...) asparagine glycan. C89 and C186 are joined by a disulfide.

Belongs to the calycin superfamily. Lipocalin family. As to quaternary structure, monomer. In terms of tissue distribution, in the male reproductive system, it is expressed in the testis and epididymis, and is secreted into the seminal fluid.

The protein localises to the rough endoplasmic reticulum. The protein resides in the nucleus membrane. Its subcellular location is the golgi apparatus. It is found in the cytoplasm. It localises to the perinuclear region. The protein localises to the secreted. It catalyses the reaction prostaglandin H2 = prostaglandin D2. Functionally, catalyzes the conversion of PGH2 to PGD2, a prostaglandin involved in smooth muscle contraction/relaxation and a potent inhibitor of platelet aggregation. Involved in a variety of CNS functions, such as sedation, NREM sleep and PGE2-induced allodynia, and may have an anti-apoptotic role in oligodendrocytes. Binds small non-substrate lipophilic molecules, including biliverdin, bilirubin, retinal, retinoic acid and thyroid hormone, and may act as a scavenger for harmful hydrophobic molecules and as a secretory retinoid and thyroid hormone transporter. Possibly involved in development and maintenance of the blood-brain, blood-retina, blood-aqueous humor and blood-testis barrier. It is likely to play important roles in both maturation and maintenance of the central nervous system and male reproductive system. Involved in PLA2G3-dependent maturation of mast cells. PLA2G3 is secreted by immature mast cells and acts on nearby fibroblasts upstream to PTDGS to synthesize PGD2, which in turn promotes mast cell maturation and degranulation via PTGDR. The polypeptide is Prostaglandin-H2 D-isomerase (PTGDS) (Ovis aries (Sheep)).